Here is a 153-residue protein sequence, read N- to C-terminus: Endoribonuclease YbeY (153 aa).

H114, H118, and H124 together coordinate Zn(2+).

The protein belongs to the endoribonuclease YbeY family. Requires Zn(2+) as cofactor.

It is found in the cytoplasm. In terms of biological role, single strand-specific metallo-endoribonuclease involved in late-stage 70S ribosome quality control and in maturation of the 3' terminus of the 16S rRNA. The polypeptide is Endoribonuclease YbeY (Shewanella amazonensis (strain ATCC BAA-1098 / SB2B)).